Here is a 525-residue protein sequence, read N- to C-terminus: Protein disulfide-isomerase A2 (525 aa).

Residues 1 to 21 (MSRQLLPVLLLLLLRASCPWG) form the signal peptide. Residues 27–152 (RSPSEEPPEE…IAEWLRRRVG (126 aa)) enclose the Thioredoxin 1 domain. Catalysis depends on nucleophile residues Cys-71 and Cys-74. Cys-71 and Cys-74 are joined by a disulfide. N-linked (GlcNAc...) asparagine glycosylation is found at Asn-127 and Asn-284. The region spanning 367-496 (VLNGQVKPYL…FSKFLDNGGV (130 aa)) is the Thioredoxin 2 domain. Active-site nucleophile residues include Cys-418 and Cys-421. Cys-418 and Cys-421 are oxidised to a cystine. A disordered region spans residues 492–525 (DNGGVLPTEEPPEEPAAPFPEPPANSTMGSKEEL). Positions 505–514 (EPAAPFPEPP) are enriched in pro residues. Residue Asn-516 is glycosylated (N-linked (GlcNAc...) asparagine). Over residues 516-525 (NSTMGSKEEL) the composition is skewed to polar residues. Positions 522–525 (KEEL) match the Prevents secretion from ER motif.

Belongs to the protein disulfide isomerase family. In terms of assembly, monomer; predominantly as monomer under reducing conditions. Homodimer; disulfide-linked. Part of a large chaperone multiprotein complex comprising DNAJB11, HSP90B1, HSPA5, HYOU, PDIA2, PDIA4, PDIA6, PPIB, SDF2L1, UGGT1 and very small amounts of ERP29, but not, or at very low levels, CALR nor CANX. Post-translationally, the disulfide-linked homodimer exhibits an enhanced chaperone activity. In terms of processing, glycosylated. As to expression, highly expressed in pancreas (at protein level).

It localises to the endoplasmic reticulum lumen. It carries out the reaction Catalyzes the rearrangement of -S-S- bonds in proteins.. Acts as an intracellular estrogen-binding protein. May be involved in modulating cellular levels and biological functions of estrogens in the pancreas. May act as a chaperone that inhibits aggregation of misfolded proteins. The protein is Protein disulfide-isomerase A2 (PDIA2) of Homo sapiens (Human).